Consider the following 150-residue polypeptide: Protein SLM6 (150 aa).

Over 1 to 76 the chain is Extracellular; sequence MCSRFSSTSL…SLLRSGVFPS (76 aa). Residues 77–97 traverse the membrane as a helical segment; that stretch reads WLFCMFSSILALAISNSFFFF. Topologically, residues 98 to 104 are cytoplasmic; that stretch reads SSNACFS. Residues 105–125 traverse the membrane as a helical segment; it reads LLFNSFLVTGFSFSADLLVLA. At 126–150 the chain is on the extracellular side; sequence AAADTLESNVSNDIGGNCATRLFKL.

The protein localises to the membrane. This is Protein SLM6 from Saccharomyces cerevisiae (strain ATCC 204508 / S288c) (Baker's yeast).